The sequence spans 129 residues: 3-aminoacrylate deaminase RutC (129 aa).

It belongs to the RutC family.

It carries out the reaction (Z)-3-aminoacrylate + H2O + H(+) = 3-oxopropanoate + NH4(+). Its function is as follows. Involved in pyrimidine catabolism. Catalyzes the deamination of 3-aminoacrylate to malonic semialdehyde, a reaction that can also occur spontaneously. RutC may facilitate the reaction and modulate the metabolic fitness, rather than catalyzing essential functions. The polypeptide is 3-aminoacrylate deaminase RutC (Caulobacter segnis (strain ATCC 21756 / DSM 7131 / JCM 7823 / NBRC 15250 / LMG 17158 / TK0059) (Mycoplana segnis)).